Reading from the N-terminus, the 595-residue chain is Protein LUTEIN DEFICIENT 5, chloroplastic (595 aa).

Residues 1–28 constitute a chloroplast transit peptide; that stretch reads MAMAFPLSYTPTITVKPVTYSRRSNFVV. Cysteine 516 contributes to the heme binding site.

It belongs to the cytochrome P450 family. It depends on heme as a cofactor.

The protein localises to the plastid. It localises to the chloroplast. In terms of biological role, heme-containing cytochrome P450 involved in the biosynthesis of xanthophylls. Specific for beta-ring hydroxylation of alpha- and beta-carotene. Also has a low activity toward the epsilon-rings of alpha-carotene. The beta-ring of alpha-carotene is the preferred substrate in planta. This is Protein LUTEIN DEFICIENT 5, chloroplastic (CYP97A3) from Arabidopsis thaliana (Mouse-ear cress).